Consider the following 737-residue polypeptide: Zinc finger protein 585A (737 aa).

One can recognise a KRAB domain in the interval 1 to 65 (MAAPTREEWR…QGERPRQSCP (65 aa)). 6 consecutive C2H2-type zinc fingers follow at residues 126–148 (YVCI…QKTH), 154–176 (FKCN…QRIH), 182–204 (YECS…EKIH), 210–232 (HECT…QKIH), 238–260 (YICI…RRIH), and 266–288 (YECS…QRVH). Residues 294–316 (YICTEYGKVFSNNSNLITHKKVQ) form a C2H2-type 7; degenerate zinc finger. 15 consecutive C2H2-type zinc fingers follow at residues 322–344 (SICT…QRIH), 350–372 (YACS…QRIH), 378–400 (YICM…QIIH), 406–428 (YKCG…KRIH), 434–456 (YMCN…QKTH), 462–484 (YICS…QRIH), 490–512 (YECS…QKIH), 518–540 (YECH…QKIH), 546–568 (YVCT…QRIH), 574–596 (YECS…QPLH), 602–624 (YVCA…QKTH), 630–652 (YICS…HRIH), 658–680 (YECS…QRIH), 686–708 (YVCA…QTTH), and 714–736 (YKCG…QSNH).

It belongs to the krueppel C2H2-type zinc-finger protein family.

Its subcellular location is the nucleus. May be involved in transcriptional regulation. The polypeptide is Zinc finger protein 585A (ZNF585A) (Pongo abelii (Sumatran orangutan)).